Consider the following 61-residue polypeptide: Metallothionein-2 (61 aa).

Residue Met-1 is modified to N-acetylmethionine. Residues 1-29 form a beta region; it reads MDPNCSCATDGSCSCSGSCKCKECKCTTC. Positions 5, 7, 13, 15, 19, 21, 24, 26, 29, 33, 34, 36, 37, 41, 44, 48, 50, and 57 each coordinate a divalent metal cation. The interval 30–61 is alpha; the sequence is KKSCCSCCPVGCAKCSQGCVCKEASEKCSCCA. Ser-58 carries the phosphoserine modification. The a divalent metal cation site is built by Cys-59 and Cys-60.

This sequence belongs to the metallothionein superfamily. Type 1 family.

Its function is as follows. Metallothioneins have a high content of cysteine residues that bind various heavy metals; these proteins are transcriptionally regulated by both heavy metals and glucocorticoids. The protein is Metallothionein-2 (MT2) of Mesocricetus auratus (Golden hamster).